A 98-amino-acid chain; its full sequence is UPF0235 protein MJ0618 (98 aa).

Belongs to the UPF0235 family.

The polypeptide is UPF0235 protein MJ0618 (Methanocaldococcus jannaschii (strain ATCC 43067 / DSM 2661 / JAL-1 / JCM 10045 / NBRC 100440) (Methanococcus jannaschii)).